The chain runs to 183 residues: Dual-action ribosomal maturation protein DarP (183 aa).

A disordered region spans residues 1–27 (MSSHSQEPVGEENFDDSEYDRPNKSQV). Acidic residues predominate over residues 9–18 (VGEENFDDSE).

It belongs to the DarP family.

It localises to the cytoplasm. Member of a network of 50S ribosomal subunit biogenesis factors which assembles along the 30S-50S interface, preventing incorrect 23S rRNA structures from forming. Promotes peptidyl transferase center (PTC) maturation. The polypeptide is Dual-action ribosomal maturation protein DarP (Bordetella pertussis (strain Tohama I / ATCC BAA-589 / NCTC 13251)).